Reading from the N-terminus, the 266-residue chain is Potassium/proton antiporter CemA (266 aa).

A run of 3 helical transmembrane segments spans residues 46–66 (VIVS…INIL), 151–171 (FLSF…IIIL), and 226–246 (FMSL…KYWI).

It belongs to the CemA family.

The protein resides in the plastid. It is found in the chloroplast inner membrane. The enzyme catalyses K(+)(in) + H(+)(out) = K(+)(out) + H(+)(in). Its function is as follows. Contributes to K(+)/H(+) antiport activity by supporting proton efflux to control proton extrusion and homeostasis in chloroplasts in a light-dependent manner to modulate photosynthesis. Prevents excessive induction of non-photochemical quenching (NPQ) under continuous-light conditions. Indirectly promotes efficient inorganic carbon uptake into chloroplasts. This is Potassium/proton antiporter CemA from Chlorella vulgaris (Green alga).